The sequence spans 418 residues: MTAFKSDFMNVLQSRGFIHQISDPDSLDALAAKGEVVAYVGYDCTAASLHVGHLLSIMMLHWLQATGNKPIALMGGGTTRVGDPSGRDETRKILTYEQIDANKESIKGTFSKFIKFGDGHSDALMADNAEWLTKLNYIEMLREIGRHFSINRMLTMDSVKLRLDREQELSFIEFNYMILQSYDFVELARRYKCNLQMGGSDQWGNIVTGVDLGRRMGTHQLHALTCPLLTTASGAKMGKTAAGAVWLNGDMLAPYDYWQYWRNTEDADVGRFLKLFTLLPMDEIERLSKLQGAEINDAKKILATEATALMHGREAADKAETTARTTFEQGGTAQDLPSVEISRGELDAGIGVLVAFAEKTGLVASNGEARRQIKAGGLKVNDAPVTDEKMTLTATDLSSDGVIKLSMGKKKHVLLRLA.

Tyr-39 contributes to the L-tyrosine binding site. The 'HIGH' region signature appears at Cys-44–His-53. 2 residues coordinate L-tyrosine: Tyr-176 and Gln-180. The short motif at Lys-236–Thr-240 is the 'KMSKS' region element. An ATP-binding site is contributed by Lys-239. Residues Ile-350–Ala-418 form the S4 RNA-binding domain.

The protein belongs to the class-I aminoacyl-tRNA synthetase family. TyrS type 1 subfamily. Homodimer.

Its subcellular location is the cytoplasm. The enzyme catalyses tRNA(Tyr) + L-tyrosine + ATP = L-tyrosyl-tRNA(Tyr) + AMP + diphosphate + H(+). Functionally, catalyzes the attachment of tyrosine to tRNA(Tyr) in a two-step reaction: tyrosine is first activated by ATP to form Tyr-AMP and then transferred to the acceptor end of tRNA(Tyr). The protein is Tyrosine--tRNA ligase of Rhodopseudomonas palustris (strain ATCC BAA-98 / CGA009).